The sequence spans 240 residues: Protein MGARP (240 aa).

Residues 1–40 (MYLRRAVSKTLALPLRAPPNPAPLGKDASLRRMSSNRFPG) are Cytoplasmic-facing. The chain crosses the membrane as a helical; Anchor for type IV membrane protein span at residues 41 to 63 (SSGSNMIYYLVVGVTVSAGGYYA). At 64–240 (YKTVTSDQAK…VGSEAASAQG (177 aa)) the chain is on the mitochondrial intermembrane side. The segment at 166–240 (RETTEVNPET…VGSEAASAQG (75 aa)) is disordered. The span at 170-181 (EVNPETTPEVTN) shows a compositional bias: low complexity. Over residues 191–201 (DNDKDTTKNET) the composition is skewed to basic and acidic residues. Over residues 202–213 (SDEYAELEEENS) the composition is skewed to acidic residues. Positions 228–240 (EASVGSEAASAQG) are enriched in low complexity.

In terms of assembly, interacts with RHOT1/Miro-1, TRAK1/OIP106 and TRAK2/GRIF1. Interacts with RHOT2/Miro-2. In terms of tissue distribution, expressed in the brain, adrenal gland and corneal endothelium (CE). Expressed in steroid-producing cells of the ovary and testis (at protein level). Expressed in steroid-producing cells of the ovary and testis. Weakly expressed in placenta. Expressed in corneal endothelial cells.

Its subcellular location is the mitochondrion. It is found in the mitochondrion outer membrane. The protein resides in the mitochondrion inner membrane. Its function is as follows. Plays a role in the trafficking of mitochondria along microtubules. Regulates the kinesin-mediated axonal transport of mitochondria to nerve terminals along microtubules during hypoxia. Participates in the translocation of TRAK2/GRIF1 from the cytoplasm to the mitochondrion. Also plays a role in steroidogenesis through maintenance of mitochondrial abundance and morphology. Plays an inhibitory role during neocortex development by regulating mitochondrial morphology, distribution and motility in neocortical neurons. This chain is Protein MGARP (MGARP), found in Homo sapiens (Human).